The following is a 418-amino-acid chain: Intracellular coagulation inhibitor 1 (418 aa).

The N-terminal stretch at 1 to 24 (MKLGDWKFCLLLFQLMFLTNVCLS) is a signal peptide. 2 N-linked (GlcNAc...) asparagine glycosylation sites follow: Asn-49 and Asn-404.

This sequence belongs to the serpin family. In terms of assembly, monomer. Forms a covalent heterodimer with clotting factor C. Interacts with big defensin. Post-translationally, N-glycosylated. Expressed in hemocytes (at protein level).

The protein resides in the secreted. Serine protease inhibitor that specifically inhibits clotting factor C. Does not inhibit clotting factor B or proclotting enzyme. This is Intracellular coagulation inhibitor 1 from Tachypleus tridentatus (Japanese horseshoe crab).